The primary structure comprises 220 residues: UPF0758 protein CKO_05095 (220 aa).

The 123-residue stretch at 98–220 (ALLSPEMTRE…YVSFAERGWI (123 aa)) folds into the MPN domain. Positions 169, 171, and 182 each coordinate Zn(2+). A JAMM motif motif is present at residues 169–182 (HNHPSGCAEPSKAD).

The protein belongs to the UPF0758 family. YicR subfamily.

In Citrobacter koseri (strain ATCC BAA-895 / CDC 4225-83 / SGSC4696), this protein is UPF0758 protein CKO_05095.